The chain runs to 201 residues: Protein CIMAP1C (201 aa).

An STPGR repeat occupies 171–186; sequence PAPTMSSRSGHTSPAR. The segment at 172-201 is disordered; sequence APTMSSRSGHTSPARLLSPWASSTRPTYAR. A compositionally biased stretch (polar residues) spans 191–201; the sequence is WASSTRPTYAR.

The protein belongs to the CIMAP family.

This Bos taurus (Bovine) protein is Protein CIMAP1C (CIMAP1C).